The sequence spans 379 residues: Reducing end xylose-releasing exo-oligoxylanase (379 aa).

Residue Glu-66 is the Proton donor of the active site. The active-site Proton acceptor is the Asp-259.

This sequence belongs to the glycosyl hydrolase 8 (cellulase D) family.

The enzyme catalyses Hydrolysis of (1-&gt;4)-beta-D-xylose residues from the reducing end of oligosaccharides.. Hydrolyzes xylooligosaccharides with a degree of polymerization of greater than or equal to 3, releasing xylose from the reducing end. Has low activity on birchwood xylan, oat spelt xylan and arabinoxylan. This chain is Reducing end xylose-releasing exo-oligoxylanase, found in Bifidobacterium adolescentis (strain ATCC 15703 / DSM 20083 / NCTC 11814 / E194a).